Reading from the N-terminus, the 472-residue chain is UDP-glycosyltransferase 100 (472 aa).

His15 serves as the catalytic Proton acceptor. His15 provides a ligand contact to an anthocyanidin. Asp117 acts as the Charge relay in catalysis. UDP-alpha-D-glucose-binding residues include Ala344, Gln346, His361, Trp364, Asn365, Ser366, and Glu369. Gly384 contributes to the an anthocyanidin binding site. 2 residues coordinate UDP-alpha-D-glucose: Glu385 and Gln386.

It belongs to the UDP-glycosyltransferase family.

It carries out the reaction (20S)-protopanaxadiol + UDP-alpha-D-glucose = (20S)-ginsenoside C-K + UDP + H(+). The catalysed reaction is (20S)-protopanaxatriol + UDP-alpha-D-glucose = (20S)-ginsenoside Rh1 + UDP + H(+). It catalyses the reaction (20S)-ginsenoside F1 + UDP-alpha-D-glucose = (20S)-ginsenoside Rg1 + UDP + H(+). The protein operates within secondary metabolite biosynthesis; terpenoid biosynthesis. Its function is as follows. Component of the dammarane-type triterpene saponins (e.g. PPT-type ginsenosides or panaxosides) biosynthetic pathway. Glycosyltransferase that catalyzes the biosynthesis of ginsenoside Rh1 from protopanaxatriol (PPT) and the conversion of ginsenoside F1 to ginsenoside Rg1. The polypeptide is UDP-glycosyltransferase 100 (Panax ginseng (Korean ginseng)).